The primary structure comprises 217 residues: Pre-mRNA-splicing factor sap62 (217 aa).

The Matrin-type zinc-finger motif lies at 54–84 (FECRLCLTTHANENSYLTHTQGKKHQTNLAR).

Belongs to the SF3A2 family. In terms of assembly, belongs to the 40S cdc5-associated complex (or cwf complex), a spliceosome sub-complex reminiscent of a late-stage spliceosome composed of the U2, U5 and U6 snRNAs and at least brr2, cdc5, cwf2/prp3, cwf3/syf1, cwf4/syf3, cwf5/ecm2, spp42/cwf6, cwf7/spf27, cwf8, cwf9, cwf10, cwf11, cwf12, prp45/cwf13, cwf14, cwf15, cwf16, cwf17, cwf18, cwf19, cwf20, cwf21, cwf22, cwf23, cwf24, cwf25, cwf26, cyp7/cwf27, cwf28, cwf29/ist3, lea1, msl1, prp5/cwf1, prp10, prp12/sap130, prp17, prp22, sap61, sap62, sap114, sap145, slu7, smb1, smd1, smd3, smf1, smg1 and syf2.

Its subcellular location is the nucleus. The protein localises to the cytoplasm. Its function is as follows. Involved in mRNA splicing where it associates with cdc5 and the other cwf proteins as part of the spliceosome. This Schizosaccharomyces pombe (strain 972 / ATCC 24843) (Fission yeast) protein is Pre-mRNA-splicing factor sap62 (sap62).